The sequence spans 100 residues: Large ribosomal subunit protein uL23 (100 aa).

It belongs to the universal ribosomal protein uL23 family. In terms of assembly, part of the 50S ribosomal subunit. Contacts protein L29, and trigger factor when it is bound to the ribosome.

One of the early assembly proteins it binds 23S rRNA. One of the proteins that surrounds the polypeptide exit tunnel on the outside of the ribosome. Forms the main docking site for trigger factor binding to the ribosome. This chain is Large ribosomal subunit protein uL23, found in Yersinia pestis bv. Antiqua (strain Antiqua).